Consider the following 723-residue polypeptide: ADP-ribosylation factor-binding protein GGA3 (723 aa).

The segment at 1-313 (MAEAEGESLE…GEVATLTLPD (313 aa)) is binds to ARF1 (in long isoform). The 131-residue stretch at 16–146 (ATNPSNRQED…MLKRQGIVQS (131 aa)) folds into the VHS domain. Residues serine 159 and serine 275 each carry the phosphoserine modification. The GAT domain maps to 171 to 298 (DEEKSKLLAK…VINSYKTIIE (128 aa)). The unstructured hinge stretch occupies residues 299–593 (GQVINGEVAT…IHVPLESIKP (295 aa)). The disordered stretch occupies residues 339 to 384 (SSVLAPAPTPPSSGIPILPPPPQASGPPRSRSSSQAEATLGPSSTS). The span at 345 to 363 (APTPPSSGIPILPPPPQAS) shows a compositional bias: pro residues. Over residues 364-374 (GPPRSRSSSQA) the composition is skewed to low complexity. Residues 391–395 (DEELL) carry the DXXLL motif. A disordered region spans residues 428–464 (DFFSPRPGTAACGASDAPLLQPSAPSSSSSQAPLPPP). Over residues 441 to 459 (ASDAPLLQPSAPSSSSSQA) the composition is skewed to low complexity. In terms of domain architecture, GAE spans 594-715 (SSALPVTAYD…TEVGEVDQFP (122 aa)).

This sequence belongs to the GGA protein family. In terms of assembly, monomer. Interacts with GGA1 and GGA2. Binds to clathrin and activated ARFs, such as ARF1, ARF5 and ARF6. Binds RABEP1 and RABGEF1. Interacts with the membrane proteins M6PR/CD-MPR and IGF2R/CI-MPR and the accessory proteins SYNRG, EPN4, NECAP1, NECAP2 and AFTPH/aftiphilin. Interacts with TSG101 and UBC. Interacts with ADRA2B. Interacts with NTRK1; the interaction is independent of NTRK1 activation and ubiquitination. Interacts (via VHS domain) with BACE1 (via DXXLL motif). Post-translationally, phosphorylated by CK2 and dephosphorylated by PP2A. Phosphorylation of GGA3 allows the internal DXXLL motif to bind the VHS domain and to inhibit the recognition of cargo signals. Ubiquitinated. In terms of processing, proteolytically cleaved during apoptosis by CASP3. As to expression, ubiquitously expressed.

The protein resides in the golgi apparatus. Its subcellular location is the trans-Golgi network membrane. The protein localises to the endosome membrane. It localises to the early endosome membrane. It is found in the recycling endosome membrane. Plays a role in protein sorting and trafficking between the trans-Golgi network (TGN) and endosomes. Mediates the ARF-dependent recruitment of clathrin to the TGN and binds ubiquitinated proteins and membrane cargo molecules with a cytosolic acidic cluster-dileucine (DXXLL) motif. Mediates export of the GPCR receptor ADRA2B to the cell surface. nvolved in BACE1 transport and sorting as well as regulation of BACE1 protein levels. Regulates retrograde transport of BACE1 from endosomes to the trans-Golgi network via interaction through the VHS motif and dependent of BACE1 phosphorylation. Modulates BACE1 protein levels independently of the interaction between VHS domain and DXXLL motif through recognition of ubiquitination. Key player in a novel DXXLL-mediated endosomal sorting machinery to the recycling pathway that targets NTRK1 to the plasma membrane. The chain is ADP-ribosylation factor-binding protein GGA3 from Homo sapiens (Human).